Consider the following 565-residue polypeptide: SRSF protein kinase 3 (565 aa).

A disordered region spans residues 1 to 44; the sequence is MSANAGGSGSVDCGGSSSSSQTSCGPESSGSELTPATPAPRLLQ. The span at 10 to 31 shows a compositional bias: low complexity; it reads SVDCGGSSSSSQTSCGPESSGS. Ser-49 is subject to Phosphoserine. In terms of domain architecture, Protein kinase spans 78–563; sequence YHVVRKLGWG…AADCLQHPWL (486 aa). Residues 84 to 92 and Lys-107 each bind ATP; that span reads LGWGHFSTV. Residue Asp-211 is the Proton acceptor of the active site. A compositionally biased stretch (polar residues) spans 236–253; sequence WQQSGAQPPSRSTVSTAP. Disordered stretches follow at residues 236-280 and 295-350; these read WQQS…KRLL and AAVQ…QTSG. The span at 262–277 shows a compositional bias: basic residues; it reads SKNKRKKMRRKRKQQK. Over residues 325–350 the composition is skewed to low complexity; that stretch reads AGPSPASSSPVPGGERSLSPSSQTSG. At Ser-328 the chain carries Phosphoserine.

Belongs to the protein kinase superfamily. CMGC Ser/Thr protein kinase family. Exclusively expressed in skeletal and heart muscle.

The protein resides in the nucleus. Its subcellular location is the cytoplasm. The enzyme catalyses L-seryl-[protein] + ATP = O-phospho-L-seryl-[protein] + ADP + H(+). The catalysed reaction is L-threonyl-[protein] + ATP = O-phospho-L-threonyl-[protein] + ADP + H(+). Serine/arginine-rich protein-specific kinase which specifically phosphorylates its substrates at serine residues located in regions rich in arginine/serine dipeptides, known as RS domains. Phosphorylates the SR splicing factor SRSF1 and the lamin-B receptor (LBR) in vitro. Required for normal muscle development. The polypeptide is SRSF protein kinase 3 (Srpk3) (Mus musculus (Mouse)).